We begin with the raw amino-acid sequence, 1336 residues long: Lysine-specific demethylase 2B (1336 aa).

A disordered region spans residues 1-25 (MAGPQMGGSAEDHPPRKRHAAEKQK). A compositionally biased stretch (basic residues) spans 15 to 25 (PRKRHAAEKQK). Phosphoserine is present on serine 57. One can recognise a JmjC domain in the interval 178–346 (FSHTKLEHLV…MQLRIYEIED (169 aa)). Threonine 239 contributes to the substrate binding site. Fe cation contacts are provided by histidine 242 and aspartate 244. Substrate is bound at residue lysine 259. Residue histidine 314 coordinates Fe cation. The segment covering 410 to 430 (MEEEACDQQPQEEEEKDEEGE) has biased composition (acidic residues). Residues 410–465 (MEEEACDQQPQEEEEKDEEGEGRDRAPKPPTDGSTSPTSTPSEDQEALGKKPKAPA) are disordered. A compositionally biased stretch (low complexity) spans 440-451 (TDGSTSPTSTPS). Phosphoserine is present on residues serine 474 and serine 477. Threonine 493 carries the phosphothreonine modification. The residue at position 497 (serine 497) is a Phosphoserine. Residues 606–652 (ARRRRTRCRKCEACLRTECGECHFCKDMKKFGGPGRMKQSCIMRQCI) form a CXXC-type zinc finger. Zn(2+) contacts are provided by cysteine 613, cysteine 616, cysteine 619, cysteine 624, cysteine 627, cysteine 630, cysteine 646, cysteine 651, cysteine 662, cysteine 665, cysteine 688, cysteine 691, histidine 696, cysteine 699, cysteine 719, and cysteine 722. The segment at 659 to 725 (TAVCLVCGEA…CWECPKCNHA (67 aa)) adopts a PHD-type zinc-finger fold. Disordered regions lie at residues 727 to 843 (KTGK…SLSP) and 855 to 1034 (QLKP…SPPK). Over residues 749 to 799 (KEQKMNRDNKEGQEPAKRRSECEEAPRRRSDEHSKKVPPDGLLRRKSDDVH) the composition is skewed to basic and acidic residues. Residues 819–843 (SSLQTSPGSSSHLSPRPPLGSSLSP) show a composition bias toward low complexity. Glycyl lysine isopeptide (Lys-Gly) (interchain with G-Cter in SUMO2) cross-links involve residues lysine 857 and lysine 890. Positions 902-911 (PKTRESDHSR) are enriched in basic and acidic residues. Positions 932-941 (KVKMRRKRRL) are enriched in basic residues. The span at 942-960 (PNKELSRELSKELNHEIQR) shows a compositional bias: basic and acidic residues. Residues 943–971 (NKELSRELSKELNHEIQRTENSLANENQQ) are a coiled coil. Phosphoserine is present on serine 951. Residues 961 to 971 (TENSLANENQQ) show a composition bias toward polar residues. A phosphoserine mark is found at serine 975, serine 979, serine 1018, and serine 1031. Over residues 1014–1024 (PSLRSPPRVIS) the composition is skewed to low complexity. Positions 1059–1105 (DGAAHVMHREVWMAVFSYLSHQDLCVCMRVCRTWNRWCCDKRLWTRI) constitute an F-box domain. LRR repeat units lie at residues 1093–1120 (NRWC…MLSG), 1133–1154 (WTNI…LRDL), 1156–1182 (LSGC…DVQW), 1222–1247 (GLDI…HLSY), 1248–1277 (CNHV…NLSD), 1278–1302 (CNKV…DLRY), and 1303–1336 (CKQV…QKLS).

The protein belongs to the JHDM1 histone demethylase family. Interacts with SKP1, forming heterodimers. The heterodimeric KDM2B-SKP1 complex interacts with the PCGF1-BCORL1 heterodimeric complex to form a homotetrameric polycomb repression complex 1 (PRC1.1). Directly interacts with CUL1. The SKP1-KDM2B complex interacts with UBB. The cofactor is Fe(2+).

The protein localises to the nucleus. The protein resides in the nucleolus. It is found in the chromosome. The catalysed reaction is N(6),N(6)-dimethyl-L-lysyl(36)-[histone H3] + 2 2-oxoglutarate + 2 O2 = L-lysyl(36)-[histone H3] + 2 formaldehyde + 2 succinate + 2 CO2. With respect to regulation, histone demethylase activity is inhibited by fumarate. Histone demethylase that demethylates 'Lys-4' and 'Lys-36' of histone H3, thereby playing a central role in histone code. Preferentially demethylates trimethylated H3 'Lys-4' and dimethylated H3 'Lys-36' residue while it has weak or no activity for mono- and tri-methylated H3 'Lys-36'. Preferentially binds the transcribed region of ribosomal RNA and represses the transcription of ribosomal RNA genes which inhibits cell growth and proliferation. May also serve as a substrate-recognition component of the SCF (SKP1-CUL1-F-box protein)-type E3 ubiquitin ligase complex. This Homo sapiens (Human) protein is Lysine-specific demethylase 2B (KDM2B).